The chain runs to 417 residues: MLALLVLVTVALASAHHGGEHFEGEKVFRVNVEDENHINIIRELASTTQIDFWKPDSVTQIKPHSTVDFRVKAEDTVTVENVLKQNELQYKVLISNLRNVVEAQFDSRVRATGHSYEKYNKWETIEAWTQQVATENPALISRSVIGTTFEGRAIYLLKVGKAGQNKPAIFMDCGFHAREWISPAFCQWFVREAVRTYGREIQVTELLDKLDFYVLPVLNIDGYIYTWTKSRFWRKTRSTHTGSSCIGTDPNRNFDAGWCEIGASRNPCDETYCGPAAESEKETKALADFIRNKLSSIKAYLTIHSYSQMMIYPYSYAYKLGENNAELNALAKATVKELASLHGTKYTYGPGATTIYPAAGGSDDWAYDQGIRYSFTFELRDTGRYGFLLPESQIRATCEETFLAIKYVASYVLEHLY.

A signal peptide spans 1–15 (MLALLVLVTVALASA). Positions 16 to 110 (HHGGEHFEGE…VEAQFDSRVR (95 aa)) are cleaved as a propeptide — activation peptide. In terms of domain architecture, Peptidase M14 spans 118–412 (KYNKWETIEA…LAIKYVASYV (295 aa)). Cysteines 173 and 186 form a disulfide. Positions 176 and 179 each coordinate Zn(2+). Substrate-binding positions include 176-179 (HARE), arginine 234, and 251-252 (NR). Intrachain disulfides connect cysteine 245–cysteine 268 and cysteine 259–cysteine 273. Histidine 304 serves as a coordination point for Zn(2+). Residues 305–306 (SY) and tyrosine 356 each bind substrate. Catalysis depends on glutamate 378, which acts as the Proton donor/acceptor.

Belongs to the peptidase M14 family. Zn(2+) is required as a cofactor. Pancreas.

It is found in the secreted. It localises to the zymogen granule lumen. The catalysed reaction is Preferential release of a C-terminal lysine or arginine amino acid.. The chain is Carboxypeptidase B (CPB1) from Homo sapiens (Human).